Consider the following 382-residue polypeptide: Flap endonuclease 1 (382 aa).

An N-domain region spans residues 1-105 (MGIKGLNAII…HELTKRSSRR (105 aa)). Mg(2+) is bound at residue Asp34. DNA contacts are provided by Arg47 and Arg71. Asp87, Glu156, Glu158, Asp177, and Asp179 together coordinate Mg(2+). Residues 120 to 251 (EKMKQERRLV…VTALKLIKTH (132 aa)) form an I-domain region. Glu156 is a binding site for DNA. Residues Gly229 and Asp231 each contribute to the DNA site. A Mg(2+)-binding site is contributed by Asp231. Residues 339–347 (IQGRLDGFF) form an interaction with PCNA region. The disordered stretch occupies residues 358 to 382 (AAAAKRAQENKKLNKNKNKVTKGRR). Positions 370–382 (LNKNKNKVTKGRR) are enriched in basic residues.

It belongs to the XPG/RAD2 endonuclease family. FEN1 subfamily. In terms of assembly, interacts with PCNA. Three molecules of RAD27 bind to one PCNA trimer with each molecule binding to one PCNA monomer. PCNA stimulates the nuclease activity without altering cleavage specificity. Mg(2+) is required as a cofactor. In terms of processing, phosphorylated. Phosphorylation upon DNA damage induces relocalization to the nuclear plasma.

It is found in the nucleus. The protein localises to the nucleolus. The protein resides in the nucleoplasm. It localises to the mitochondrion. In terms of biological role, structure-specific nuclease with 5'-flap endonuclease and 5'-3' exonuclease activities involved in DNA replication and repair. During DNA replication, cleaves the 5'-overhanging flap structure that is generated by displacement synthesis when DNA polymerase encounters the 5'-end of a downstream Okazaki fragment. It enters the flap from the 5'-end and then tracks to cleave the flap base, leaving a nick for ligation. Also involved in the long patch base excision repair (LP-BER) pathway, by cleaving within the apurinic/apyrimidinic (AP) site-terminated flap. Acts as a genome stabilization factor that prevents flaps from equilibrating into structures that lead to duplications and deletions. Also possesses 5'-3' exonuclease activity on nicked or gapped double-stranded DNA, and exhibits RNase H activity. Also involved in replication and repair of rDNA and in repairing mitochondrial DNA. This chain is Flap endonuclease 1, found in Saccharomyces cerevisiae (strain YJM789) (Baker's yeast).